Consider the following 453-residue polypeptide: MTKFSEPIRDSHVAVLAFFPVGAHAGPLLAVTRRLAAASPSTIFSFFNTARSNASLFSSDHPENIKVHDVSDGVPEGTMLGNPLEMVELFLEAAPRIFRSEIAAAEIEVGKKVTCMLTDAFFWFAADIAAELNATWVAFWAGGANSLCAHLYTDLIRETIGLKDVSMEETLGFIPGMENYRVKDIPEEVVFEDLDSVFPKALYQMSLALPRASAVFISSFEELEPTLNYNLRSKLKRFLNIAPLTLLSSTSEKEMRDPHGCFAWMGKRSAASVAYISFGTVMEPPPEELVAIAQGLESSKVPFVWSLKEKNMVHLPKGFLDRTREQGIVVPWAPQVELLKHEAMGVNVTHCGWNSVLESVSAGVPMIGRPILADNRLNGRAVEVVWKVGVMMDNGVFTKEGFEKCLNDVFVHDDGKTMKANAKKLKEKLQEDFSMKGSSLENFKILLDEIVKV.

The active-site Proton acceptor is H24. Residue H24 coordinates an anthocyanidin. The active-site Charge relay is the D119. H150 contributes to the an anthocyanidin binding site. UDP-beta-L-rhamnose is bound by residues T280, A333, H350, N354, S355, and E358. A373 contributes to the an anthocyanidin binding site.

This sequence belongs to the UDP-glycosyltransferase family. As to expression, expressed in leaves, flowers, siliques, and stems. Expressed in the shoot apex.

It carries out the reaction kaempferol + UDP-beta-L-rhamnose = kaempferol 3-O-alpha-L-rhamnoside + UDP + H(+). It catalyses the reaction UDP-beta-L-rhamnose + quercetin = quercitrin + UDP + H(+). Its pathway is flavonoid metabolism. Flavonol 3-O-rhamnosyltransferase that catalyzes the transfer of rhamnose from UDP-rhamnose to the 3-OH position of kaempferol and quercetin. Possesses low quercetin 3-O-glucosyltransferase activity in vitro. The polypeptide is Flavonol-3-O-rhamnosyltransferase (Arabidopsis thaliana (Mouse-ear cress)).